Here is a 364-residue protein sequence, read N- to C-terminus: MALSRLMIRDFRNISVADLSLAADFNFLVGANGSGKTSVLEAIYTLGHGRAFRSLQSGRVIRHEQPEFVLHGRIEAGNVDARATSVGLSRNRLGDSTVRIDGSDGHKVAELAQLLPMQLITPEGFTLLNGGPKYRRAFMDWGCFHNEPAFFTAWSNLRRLLKQRNAALRQVSRYQQLRVWDQELIPLANRISEWRADYSAAIAADITATCAQFLPEFRLDFSFQRGWDKESDFGELLERQFERDRALTYTASGPHKADFRIRAEGVPVEDILSRGQLKLLMCALRLAQGEFLTHRNGRRCLYLIDDFASELDTGRRRLLAERLKATHAQVFVSAVSADQIRDIPDEKGKMFKVEQGKISLQSEV.

30–37 contacts ATP; it reads GANGSGKT.

It belongs to the RecF family.

Its subcellular location is the cytoplasm. The RecF protein is involved in DNA metabolism; it is required for DNA replication and normal SOS inducibility. RecF binds preferentially to single-stranded, linear DNA. It also seems to bind ATP. This is DNA replication and repair protein RecF from Sodalis glossinidius (strain morsitans).